Consider the following 404-residue polypeptide: Argininosuccinate synthase (404 aa).

ATP is bound by residues 12–20 (AYSGGLDTS) and alanine 39. Positions 91 and 96 each coordinate L-citrulline. An ATP-binding site is contributed by glycine 121. L-aspartate is bound by residues threonine 123, asparagine 127, and aspartate 128. Asparagine 127 provides a ligand contact to L-citrulline. 5 residues coordinate L-citrulline: arginine 131, serine 180, serine 189, glutamate 265, and tyrosine 277.

It belongs to the argininosuccinate synthase family. Type 1 subfamily. Homotetramer.

The protein resides in the cytoplasm. It catalyses the reaction L-citrulline + L-aspartate + ATP = 2-(N(omega)-L-arginino)succinate + AMP + diphosphate + H(+). It functions in the pathway amino-acid biosynthesis; L-arginine biosynthesis; L-arginine from L-ornithine and carbamoyl phosphate: step 2/3. This chain is Argininosuccinate synthase, found in Vibrio parahaemolyticus serotype O3:K6 (strain RIMD 2210633).